The following is a 406-amino-acid chain: 3-isopropylmalate dehydrogenase, chloroplastic (406 aa).

A chloroplast-targeting transit peptide spans 1-34 (MAAALQTNIRPVKFPATLRALTKQSSPAPFRVRC). S71 carries the phosphoserine modification. 117–130 (GYKWDKNEKHLKPE) is a binding site for NAD(+). 4 residues coordinate substrate: R137, R147, R175, and D265. D265, D289, and D293 together coordinate Mg(2+). Position 323 to 335 (323 to 335 (GSAPDIAGQDKAN)) interacts with NAD(+).

This sequence belongs to the isocitrate and isopropylmalate dehydrogenases family. Homodimer. Mg(2+) serves as cofactor. Mn(2+) is required as a cofactor.

It is found in the plastid. Its subcellular location is the chloroplast. It carries out the reaction (2R,3S)-3-isopropylmalate + NAD(+) = 4-methyl-2-oxopentanoate + CO2 + NADH. It participates in amino-acid biosynthesis; L-leucine biosynthesis; L-leucine from 3-methyl-2-oxobutanoate: step 3/4. Functionally, catalyzes the oxidation of 3-carboxy-2-hydroxy-4-methylpentanoate (3-isopropylmalate) to 3-carboxy-4-methyl-2-oxopentanoate. The product decarboxylates to 4-methyl-2 oxopentanoate. The polypeptide is 3-isopropylmalate dehydrogenase, chloroplastic (Brassica napus (Rape)).